Consider the following 189-residue polypeptide: MTTTTEARALPRLKQRYRDEIKGQLHEQFSYGNVMQIPGLTKVVVNMGVGEAARDSKLIDGAVRDLTAITGQKPQITKARKSIAQFKLREGMPIGCHTTLRGDRMWEFLDRLLSLALPRIRDFRGLSPKQFDGNGNYTFGLNEQSMFHEIDQDKIDRVRGMDITVVTTATTDDEGRALLRALGFPFKEN.

This sequence belongs to the universal ribosomal protein uL5 family. As to quaternary structure, part of the 50S ribosomal subunit; part of the 5S rRNA/L5/L18/L25 subcomplex. Contacts the 5S rRNA and the P site tRNA. Forms a bridge to the 30S subunit in the 70S ribosome.

Functionally, this is one of the proteins that bind and probably mediate the attachment of the 5S RNA into the large ribosomal subunit, where it forms part of the central protuberance. In the 70S ribosome it contacts protein S13 of the 30S subunit (bridge B1b), connecting the 2 subunits; this bridge is implicated in subunit movement. Contacts the P site tRNA; the 5S rRNA and some of its associated proteins might help stabilize positioning of ribosome-bound tRNAs. This is Large ribosomal subunit protein uL5 from Kineococcus radiotolerans (strain ATCC BAA-149 / DSM 14245 / SRS30216).